Here is a 298-residue protein sequence, read N- to C-terminus: Proline iminopeptidase (298 aa).

Residues 26–277 (VLLLHGGPAM…NGSHLAMWDD (252 aa)) enclose the AB hydrolase-1 domain. Serine 103 functions as the Nucleophile in the catalytic mechanism. Residue aspartate 244 is part of the active site. Catalysis depends on histidine 271, which acts as the Proton donor.

The protein belongs to the peptidase S33 family. As to quaternary structure, monomer.

The catalysed reaction is Release of N-terminal proline from a peptide.. Its function is as follows. Releases the N-terminal proline from various substrates. Cleaves specifically Pro-betaNA and small peptides containing proline at the amino terminal. No activity against hydroxyproline-betaNA. The chain is Proline iminopeptidase (fpaP) from Elizabethkingia meningoseptica (Chryseobacterium meningosepticum).